We begin with the raw amino-acid sequence, 720 residues long: Mitogen-activated protein kinase 6 (720 aa).

Residue Met-1 forms a Peptide (Met-Gly) (interchain with G-Cter in ubiquitin) linkage. One can recognise a Protein kinase domain in the interval 20 to 316; sequence YMDLKPLGCG…AEEALSHPYM (297 aa). Residues 26 to 34 and Lys-49 each bind ATP; that span reads LGCGGNGLV. Residue Asp-152 is the Proton acceptor of the active site. Residue Ser-189 is modified to Phosphoserine; by PAK1, PAK2 and PAK3. The SEG motif motif lies at 189-191; sequence SEG. The FRIEDE motif signature appears at 332–337; the sequence is FHIEDE. A phosphoserine mark is found at Ser-386, Ser-554, and Ser-556. The segment at 638–657 is disordered; the sequence is SEMLETEPVEEGKRGERGRE. A compositionally biased stretch (basic and acidic residues) spans 647–657; that stretch reads EEGKRGERGRE. Ser-683 is modified (phosphoserine). Residues 700 to 714 show a composition bias toward polar residues; it reads AMKSSPQIPHKTYSS. Residues 700-720 are disordered; sequence AMKSSPQIPHKTYSSILKHLN.

It belongs to the protein kinase superfamily. CMGC Ser/Thr protein kinase family. MAP kinase subfamily. As to quaternary structure, heterodimer with ERK4/MAPK4. Interacts with (via FRIEDE motif) MAPKAPK5. Interacts with UBE3A; this interaction may be indirect and mediated by HERC2, possibly via HERC2 interaction with NEURL4. The cofactor is Mg(2+). In terms of processing, phosphorylated at Ser-189 by PAK1, PAK2 and PAK3 resulting in catalytic activation. Phosphorylated by MAPKAPK5 at other sites. Ubiquitination at Met-1 leads to degradation by the proteasome pathway.

The protein localises to the cytoplasm. Its subcellular location is the nucleus. It carries out the reaction L-seryl-[protein] + ATP = O-phospho-L-seryl-[protein] + ADP + H(+). The enzyme catalyses L-threonyl-[protein] + ATP = O-phospho-L-threonyl-[protein] + ADP + H(+). Activated by phosphorylation at Ser-189. In terms of biological role, atypical MAPK protein. Phosphorylates microtubule-associated protein 2 (MAP2) and MAPKAPK5. The precise role of the complex formed with MAPKAPK5 is still unclear, but the complex follows a complex set of phosphorylation events: upon interaction with atypical MAPKAPK5, ERK3/MAPK6 is phosphorylated at Ser-189 and then mediates phosphorylation and activation of MAPKAPK5, which in turn phosphorylates ERK3/MAPK6. May promote entry in the cell cycle. The sequence is that of Mitogen-activated protein kinase 6 (Mapk6) from Mus musculus (Mouse).